The sequence spans 522 residues: F-box only protein 7 (522 aa).

The tract at residues 1-87 (MKLRVRLQKR…EDAIAAPNLP (87 aa)) is ubiquitin-like. Polar residues predominate over residues 88–132 (SSTVSEHSSVQNNDQPSLATSSSQSNIQDAQLHDSLQGQATQSEV). A disordered region spans residues 88 to 151 (SSTVSEHSSV…GQHFEAEAVP (64 aa)). The tract at residues 91-128 (VSEHSSVQNNDQPSLATSSSQSNIQDAQLHDSLQGQAT) is important for interaction with PINK1. An important for interaction with CDK6 region spans residues 128-168 (TQSEVWNDDSVSGPGQHFEAEAVPDVVDVEEGTGYYLAEPM). The tract at residues 179–323 (PHSLEILYQS…PLLAFTRQAL (145 aa)) is important for dimerization and interaction with PSMF1. Positions 328–374 (VFGLVVLPLELKLRIFRLLDVRSVLSLSAVCRDLCITSNDQLLWRCL) constitute an F-box domain. The tract at residues 380–522 (RDGSIRGRDT…WPTDSRLPFM (143 aa)) is important for interaction with CDK6. Residues Arg431 and Arg451 each carry the omega-N-methylarginine modification. The RFDP motif signature appears at 481-484 (RFDP). The disordered stretch occupies residues 484 to 522 (PVGPLPGPNPILPGRGGPSDRFPLRPSRGWPTDSRLPFM). Residue Arg518 is modified to Asymmetric dimethylarginine.

In terms of assembly, part of the SCF (SKP1-CUL1-F-box) E3 ubiquitin-protein ligase complex SCF(FBXO7) formed of CUL1, SKP1, RBX1 and FBXO7. Interacts via its C-terminal proline-rich region with DLGAP5. Interacts with BIRC2. Interacts with CDK6 and promotes its interaction with D-type cyclin. Interacts (via the N-terminal Ubl domain) with PRKN. Interacts (via N-terminal region) with PINK1. Interacts with PSMF1.

The protein localises to the cytoplasm. It is found in the nucleus. The protein resides in the mitochondrion. It localises to the cytosol. Its pathway is protein modification; protein ubiquitination. Functionally, substrate recognition component of a SCF (SKP1-CUL1-F-box protein) E3 ubiquitin-protein ligase complex which mediates the ubiquitination and subsequent proteasomal degradation of target proteins and plays a role in several biological processes such as cell cycle, cell proliferation, or maintenance of chromosome stability. Recognizes and ubiquitinates BIRC2 and the cell cycle regulator DLGAP5. Plays a role downstream of PINK1 in the clearance of damaged mitochondria via selective autophagy (mitophagy) by targeting PRKN to dysfunctional depolarized mitochondria. Promotes MFN1 ubiquitination. Mediates the ubiquitination and proteasomal degradation of UXT isoform 2, thereby impairing the NF-kappa-B signaling pathway. Inhibits NF-kappa-B pathway also by promoting the ubiquitinatioin of TRAF2. Affects the assembly state and activity of the proteasome in the cells including neurons by ubiquitinating the proteasomal subunit PSMA2 via 'Lys-63'-linked polyubiquitin chains. Promotes 'Lys-48'-linked polyubiquitination SIRT7, leading to the hydrogen peroxide-induced cell death. This chain is F-box only protein 7 (FBXO7), found in Bos taurus (Bovine).